We begin with the raw amino-acid sequence, 570 residues long: Sulfite reductase [NADPH] hemoprotein beta-component (570 aa).

Residues Cys-434, Cys-440, Cys-479, and Cys-483 each contribute to the [4Fe-4S] cluster site. Cys-483 is a siroheme binding site.

Belongs to the nitrite and sulfite reductase 4Fe-4S domain family. In terms of assembly, alpha(8)-beta(8). The alpha component is a flavoprotein, the beta component is a hemoprotein. It depends on siroheme as a cofactor. Requires [4Fe-4S] cluster as cofactor.

It carries out the reaction hydrogen sulfide + 3 NADP(+) + 3 H2O = sulfite + 3 NADPH + 4 H(+). It functions in the pathway sulfur metabolism; hydrogen sulfide biosynthesis; hydrogen sulfide from sulfite (NADPH route): step 1/1. Its function is as follows. Component of the sulfite reductase complex that catalyzes the 6-electron reduction of sulfite to sulfide. This is one of several activities required for the biosynthesis of L-cysteine from sulfate. The polypeptide is Sulfite reductase [NADPH] hemoprotein beta-component (Salmonella newport (strain SL254)).